Here is a 186-residue protein sequence, read N- to C-terminus: Ribosome-recycling factor (186 aa).

The protein belongs to the RRF family.

It localises to the cytoplasm. Responsible for the release of ribosomes from messenger RNA at the termination of protein biosynthesis. May increase the efficiency of translation by recycling ribosomes from one round of translation to another. The chain is Ribosome-recycling factor from Janthinobacterium sp. (strain Marseille) (Minibacterium massiliensis).